We begin with the raw amino-acid sequence, 441 residues long: Ribosomal protein uS12 methylthiotransferase RimO (441 aa).

Residues 8–118 (PKIGFVSLGC…VLEHVHHYVP (111 aa)) enclose the MTTase N-terminal domain. [4Fe-4S] cluster is bound by residues cysteine 17, cysteine 53, cysteine 82, cysteine 150, cysteine 154, and cysteine 157. One can recognise a Radical SAM core domain in the interval 136–373 (LTPRHYAYLK…MQLQQQISAE (238 aa)). Positions 376-441 (QEKVGREILV…DEYDLWGSRV (66 aa)) constitute a TRAM domain.

The protein belongs to the methylthiotransferase family. RimO subfamily. It depends on [4Fe-4S] cluster as a cofactor.

It is found in the cytoplasm. The enzyme catalyses L-aspartate(89)-[ribosomal protein uS12]-hydrogen + (sulfur carrier)-SH + AH2 + 2 S-adenosyl-L-methionine = 3-methylsulfanyl-L-aspartate(89)-[ribosomal protein uS12]-hydrogen + (sulfur carrier)-H + 5'-deoxyadenosine + L-methionine + A + S-adenosyl-L-homocysteine + 2 H(+). Catalyzes the methylthiolation of an aspartic acid residue of ribosomal protein uS12. This chain is Ribosomal protein uS12 methylthiotransferase RimO, found in Shigella sonnei (strain Ss046).